Reading from the N-terminus, the 930-residue chain is A disintegrin and metalloproteinase with thrombospondin motifs 5 (930 aa).

The signal sequence occupies residues M1–P16. Residues L17–R261 constitute a propeptide that is removed on maturation. Disordered regions lie at residues A24–R69 and R206–R231. Residues A31 to Q42 show a composition bias toward low complexity. Positions R46–G59 are enriched in basic and acidic residues. The Cysteine switch motif lies at A207 to S214. C209 contributes to the Zn(2+) binding site. Residues R267–P476 form the Peptidase M12B domain. Cystine bridges form between C342-C394, C371-C376, C388-C471, C426-C455, C497-C519, C508-C529, C514-C548, and C542-C553. H410 contributes to the Zn(2+) binding site. E411 is a catalytic residue. The Zn(2+) site is built by H414 and H420. Residues E485–S566 form the Disintegrin domain. An N-linked (GlcNAc...) asparagine glycan is attached at N498. One can recognise a TSP type-1 1 domain in the interval H567–P622. C-linked (Man) tryptophan glycosylation is found at W570 and W573. 3 cysteine pairs are disulfide-bonded: C579–C616, C583–C621, and C594–C606. S582 carries an O-linked (Fuc...) serine glycan. 3 N-linked (GlcNAc...) asparagine glycosylation sites follow: N728, N802, and N807. A spacer region spans residues T732–T874. The region spanning S875–K929 is the TSP type-1 2 domain.

Zn(2+) is required as a cofactor. In terms of processing, the precursor is cleaved by furin and PCSK7 outside of the cell. Post-translationally, glycosylated. Can be O-fucosylated by POFUT2 on a serine or a threonine residue found within the consensus sequence C1-X(2)-(S/T)-C2-G of the TSP type-1 repeat domains where C1 and C2 are the first and second cysteine residue of the repeat, respectively. Fucosylated repeats can then be further glycosylated by the addition of a beta-1,3-glucose residue by the glucosyltransferase, B3GALTL. Fucosylation mediates the efficient secretion of ADAMTS family members. Can also be C-glycosylated with one or two mannose molecules on tryptophan residues within the consensus sequence W-X-X-W of the TPRs, and N-glycosylated. These other glycosylations can also facilitate secretion. Expressed at low level in placenta primarily but also detected in heart and brain, cervix, uterus, bladder, esophagus, rib cartilage, chondroblastoma, fibrous tissue and a joint capsule from an arthritic patient.

Its subcellular location is the secreted. It localises to the extracellular space. It is found in the extracellular matrix. Functionally, metalloproteinase that plays an important role in connective tissue organization, development, inflammation and cell migration. Extracellular matrix (ECM) degrading enzyme that show proteolytic activity toward the hyalectan group of chondroitin sulfate proteoglycans (CSPGs) including ACAN, VCAN, BCAN and NCAN. Cleavage within the hyalectans occurs at Glu-Xaa recognition motifs. Plays a role in embryonic development, including limb and cardiac morphogenesis, and skeletal muscle development through its VCAN remodeling properties. Cleaves VCAN in the pericellular matrix surrounding myoblasts, facilitating myoblast contact and fusion which is required for skeletal muscle development and regeneration. Participates in development of brown adipose tissue and browning of white adipose tissue. Plays an important role for T-lymphocyte migration from draining lymph nodes following viral infection. This chain is A disintegrin and metalloproteinase with thrombospondin motifs 5 (ADAMTS5), found in Homo sapiens (Human).